A 95-amino-acid polypeptide reads, in one-letter code: Acylphosphatase (95 aa).

In terms of domain architecture, Acylphosphatase-like spans 7–95 (RLTAWVLGTV…PKGEVGFRTR (89 aa)). Residues Arg-22 and Asn-40 contribute to the active site.

The protein belongs to the acylphosphatase family.

The enzyme catalyses an acyl phosphate + H2O = a carboxylate + phosphate + H(+). The polypeptide is Acylphosphatase (acyP) (Corynebacterium diphtheriae (strain ATCC 700971 / NCTC 13129 / Biotype gravis)).